Reading from the N-terminus, the 625-residue chain is Chaperone protein DnaK (625 aa).

T197 carries the post-translational modification Phosphothreonine; by autocatalysis. Residues 598 to 625 (AYAKEQGGTQQGTDTKKKDDDVIDAEVE) form a disordered region.

The protein belongs to the heat shock protein 70 family.

In terms of biological role, acts as a chaperone. In Helicobacter hepaticus (strain ATCC 51449 / 3B1), this protein is Chaperone protein DnaK.